The sequence spans 80 residues: Large ribosomal subunit protein bL31 (80 aa).

Zn(2+) contacts are provided by Cys16, Cys18, Cys38, and Cys41.

The protein belongs to the bacterial ribosomal protein bL31 family. Type A subfamily. Part of the 50S ribosomal subunit. Zn(2+) is required as a cofactor.

Its function is as follows. Binds the 23S rRNA. This is Large ribosomal subunit protein bL31 from Mycobacterium avium (strain 104).